Consider the following 458-residue polypeptide: tRNA modification GTPase MnmE (458 aa).

Residues arginine 30, glutamate 90, and lysine 129 each contribute to the (6S)-5-formyl-5,6,7,8-tetrahydrofolate site. Positions 225-379 (GLSICLIGCP…LHQTIDTIIW (155 aa)) constitute a TrmE-type G domain. Asparagine 235 serves as a coordination point for K(+). GTP-binding positions include 235 to 240 (NVGKSS), 254 to 260 (SPIPGTT), and 279 to 282 (DTAG). Serine 239 is a Mg(2+) binding site. K(+) contacts are provided by serine 254, isoleucine 256, and threonine 259. Threonine 260 contacts Mg(2+). Residue lysine 458 coordinates (6S)-5-formyl-5,6,7,8-tetrahydrofolate.

It belongs to the TRAFAC class TrmE-Era-EngA-EngB-Septin-like GTPase superfamily. TrmE GTPase family. Homodimer. Heterotetramer of two MnmE and two MnmG subunits. It depends on K(+) as a cofactor.

The protein localises to the cytoplasm. Functionally, exhibits a very high intrinsic GTPase hydrolysis rate. Involved in the addition of a carboxymethylaminomethyl (cmnm) group at the wobble position (U34) of certain tRNAs, forming tRNA-cmnm(5)s(2)U34. The sequence is that of tRNA modification GTPase MnmE from Protochlamydia amoebophila (strain UWE25).